The chain runs to 428 residues: MLKLHEKSGDDTVALMADIGRRARAAARPLAIAPTAAKNAALLAMADAIVARQQDILDANAIDVSNGEEAGLSASFMDRLKLTPARIRAMADGIREIAELKDPVGDVIAAWERPNGLRIERVRTPLGVVGVIYESRPNVTADAGALCLKAGNPVILRGGSDSLNSSAAIHACLVEGLKAAGLPEDAIQLVPTTDRAAVGEMLKGLGGALDVIIPRGGKSLVGRVQSEARVPVFAHLEGICHLYIDRSADLDMAVKIAVNAKMRRTGVCGAAETLLVDRAVASTHLVPILDALRAAGCEIHADQEVLKVFFDAKPATDADWVTEYLDAIIAVKLVDGIGGAIEHIETFSSHHTEAIIAEDPKAVERFFNEIDSAILLHNASTQFADGGEFGMGAEIGIATGKMHARGPVGVEQLTSFKYRVRGSGQVRP.

This sequence belongs to the gamma-glutamyl phosphate reductase family.

It is found in the cytoplasm. It catalyses the reaction L-glutamate 5-semialdehyde + phosphate + NADP(+) = L-glutamyl 5-phosphate + NADPH + H(+). It participates in amino-acid biosynthesis; L-proline biosynthesis; L-glutamate 5-semialdehyde from L-glutamate: step 2/2. In terms of biological role, catalyzes the NADPH-dependent reduction of L-glutamate 5-phosphate into L-glutamate 5-semialdehyde and phosphate. The product spontaneously undergoes cyclization to form 1-pyrroline-5-carboxylate. This Mesorhizobium japonicum (strain LMG 29417 / CECT 9101 / MAFF 303099) (Mesorhizobium loti (strain MAFF 303099)) protein is Gamma-glutamyl phosphate reductase.